A 178-amino-acid polypeptide reads, in one-letter code: Large ribosomal subunit protein uL6 (178 aa).

This sequence belongs to the universal ribosomal protein uL6 family. In terms of assembly, part of the 50S ribosomal subunit.

This protein binds to the 23S rRNA, and is important in its secondary structure. It is located near the subunit interface in the base of the L7/L12 stalk, and near the tRNA binding site of the peptidyltransferase center. This chain is Large ribosomal subunit protein uL6, found in Frankia alni (strain DSM 45986 / CECT 9034 / ACN14a).